Reading from the N-terminus, the 488-residue chain is N-succinylglutamate 5-semialdehyde dehydrogenase (488 aa).

221 to 226 (GSSRTG) is an NAD(+) binding site. Active-site residues include Glu244 and Cys278.

Belongs to the aldehyde dehydrogenase family. AstD subfamily.

The catalysed reaction is N-succinyl-L-glutamate 5-semialdehyde + NAD(+) + H2O = N-succinyl-L-glutamate + NADH + 2 H(+). The protein operates within amino-acid degradation; L-arginine degradation via AST pathway; L-glutamate and succinate from L-arginine: step 4/5. In terms of biological role, catalyzes the NAD-dependent reduction of succinylglutamate semialdehyde into succinylglutamate. This is N-succinylglutamate 5-semialdehyde dehydrogenase from Pseudomonas savastanoi pv. phaseolicola (strain 1448A / Race 6) (Pseudomonas syringae pv. phaseolicola (strain 1448A / Race 6)).